A 420-amino-acid chain; its full sequence is Glucose-1-phosphate adenylyltransferase (420 aa).

Residues Tyr107, Gly173, 188–189, and Ser206 contribute to the alpha-D-glucose 1-phosphate site; that span reads EK.

The protein belongs to the bacterial/plant glucose-1-phosphate adenylyltransferase family. Homotetramer.

It catalyses the reaction alpha-D-glucose 1-phosphate + ATP + H(+) = ADP-alpha-D-glucose + diphosphate. Its pathway is glycan biosynthesis; glycogen biosynthesis. Involved in the biosynthesis of ADP-glucose, a building block required for the elongation reactions to produce glycogen. Catalyzes the reaction between ATP and alpha-D-glucose 1-phosphate (G1P) to produce pyrophosphate and ADP-Glc. In Shewanella sp. (strain MR-4), this protein is Glucose-1-phosphate adenylyltransferase.